We begin with the raw amino-acid sequence, 155 residues long: Ribosomal RNA large subunit methyltransferase H (155 aa).

Residues Leu-72, Gly-103, and 122–127 (LSPLTL) contribute to the S-adenosyl-L-methionine site.

It belongs to the RNA methyltransferase RlmH family. In terms of assembly, homodimer.

It is found in the cytoplasm. The catalysed reaction is pseudouridine(1915) in 23S rRNA + S-adenosyl-L-methionine = N(3)-methylpseudouridine(1915) in 23S rRNA + S-adenosyl-L-homocysteine + H(+). Functionally, specifically methylates the pseudouridine at position 1915 (m3Psi1915) in 23S rRNA. The polypeptide is Ribosomal RNA large subunit methyltransferase H (Aeromonas salmonicida (strain A449)).